We begin with the raw amino-acid sequence, 520 residues long: Sodium-dependent dicarboxylate transporter SdcS (520 aa).

A run of 14 helical transmembrane segments spans residues 30-50 (AGQLIGLILGPLLFLLTLLFF), 55-75 (LPWKGVYVLAITLWIATWWIT), 77-97 (AIPIAATSLLPIVLLPLGHIL), 104-124 (SEYGNDIIFLFLGGFILAIAM), 160-180 (SMFVSNTAAVMIMIPIGLAII), 207-227 (IGYAGTIGGLGTLIGTPPLII), 242-262 (FAKWMIVGIPTVIVLLGITWL), 298-318 (KVVQTIFVLASLLWITREFLL), 323-343 (VTSSVADGTIAIFISILLFVI), 362-382 (ELPWGVLILFGGGLALAKGIS), 399-419 (GVSPILIVIVITIFVLFLTEV), 428-448 (MILPILATLSVAVGVHPLLLM), 452-472 (AMAANCAYMLPVGTPPNAIIF), and 491-511 (LISAIIIILVVYYVMPIVLGI).

Belongs to the SLC13A/DASS transporter (TC 2.A.47) family. NADC subfamily.

Its subcellular location is the cell membrane. Mediates the transport of the dicarboxylates fumarate, malate, and succinate across the cytoplasmic membrane via a Na(+)-electrochemical gradient. This chain is Sodium-dependent dicarboxylate transporter SdcS (sdcS), found in Staphylococcus aureus (strain MSSA476).